Here is a 180-residue protein sequence, read N- to C-terminus: Large ribosomal subunit protein uL6 (180 aa).

Belongs to the universal ribosomal protein uL6 family. As to quaternary structure, part of the 50S ribosomal subunit.

Its function is as follows. This protein binds to the 23S rRNA, and is important in its secondary structure. It is located near the subunit interface in the base of the L7/L12 stalk, and near the tRNA binding site of the peptidyltransferase center. This is Large ribosomal subunit protein uL6 from Borrelia garinii subsp. bavariensis (strain ATCC BAA-2496 / DSM 23469 / PBi) (Borreliella bavariensis).